The following is a 2731-amino-acid chain: Teneurin-1 (2731 aa).

The disordered stretch occupies residues 1–72 (MEQTDCKPYQ…KRKDVEKSTQ (72 aa)). One can recognise a Teneurin N-terminal domain in the interval 1–318 (MEQTDCKPYQ…KPYRCCNWKC (318 aa)). The Cytoplasmic portion of the chain corresponds to 1 to 324 (MEQTDCKPYQ…NWKCTALSAT (324 aa)). A compositionally biased stretch (basic and acidic residues) spans 44 to 55 (ETLHEYNQELRR). Positions 62 to 65 (RKRK) match the Nuclear localization signal (NLS) motif. S105 bears the Phosphoserine mark. T109 bears the Phosphothreonine mark. Residue S116 is modified to Phosphoserine. A disordered region spans residues 175–241 (DSAQDMQSSP…PAPPTSTQDS (67 aa)). A compositionally biased stretch (polar residues) spans 178-189 (QDMQSSPHNQFT). Over residues 192–201 (PLPPPPPPPH) the composition is skewed to pro residues. The segment covering 214 to 224 (DSLQRRSMTTR) has biased composition (polar residues). Residues 290 to 297 (PPPRPLPR) carry the Required for interaction with SORBS1 (Ten-1 ICD form) motif. Residues 325-345 (AITVTLALLLAYVIAVHLFGL) form a helical membrane-spanning segment. The Extracellular portion of the chain corresponds to 346–2731 (TWQLQPVGQI…FMRQSEIGRR (2386 aa)). Residue N432 is glycosylated (N-linked (GlcNAc...) asparagine). EGF-like domains are found at residues 527–558 (IMDD…PDCA), 559–590 (RDSC…ECDV), 591–623 (PEEQ…EICE), 624–656 (EEDC…NCET), 657–690 (PLPI…SDCS), 691–720 (TELC…GPTC), 721–752 (EERS…DHCT), and 760–795 (VRDG…TGCN). 22 disulfide bridges follow: C531/C541, C535/C546, C548/C557, C566/C577, C579/C588, C595/C606, C600/C611, C613/C622, C627/C638, C632/C643, C645/C654, C665/C678, C680/C689, C694/C704, C698/C709, C711/C720, C725/C735, C729/C740, C742/C751, C764/C774, C768/C783, and C785/C794. N-linked (GlcNAc...) asparagine glycans are attached at residues N904 and N1083. NHL repeat units follow at residues 1193–1218 (LFAP…VRRI), 1298–1342 (SHCG…NAVI), 1357–1408 (LSCD…IAGR), 1420–1464 (FLVS…VTTN), and 1487–1530 (CFSG…ISKN). The YD 1 repeat unit spans residues 1540–1559 (YEIASPADQELYQFTVNGTH). 2 N-linked (GlcNAc...) asparagine glycosylation sites follow: N1556 and N1573. YD repeat units lie at residues 1576 to 1596 (YNAE…VHIR), 1614 to 1638 (YWLT…ALMT), 1639 to 1660 (YPGN…TVYE), and 1661 to 1681 (YDPE…SSFH). Residues N1669, N1705, N1743, N1763, N1787, and N1848 are each glycosylated (N-linked (GlcNAc...) asparagine). YD repeat units follow at residues 1851–1870 (YSPS…EKME), 1871–1891 (YDQS…WSYT), 1892–1910 (YLEK…YIFE), 1911–1931 (YDQS…HSLQ), 1939–1955 (YRNI…FIQD), 1956–1975 (YSRD…RRVL), 1976–1995 (YKYT…TQVT), 1998–2018 (YEES…FICT), 2021–2041 (YRQT…EGLV), 2091–2111 (YDLN…FNAN), and 2119–2139 (YEIL…MGRM). A glycan (N-linked (GlcNAc...) asparagine) is linked at N2151. 5 YD repeats span residues 2159-2179 (YDAD…WRYS), 2180-2200 (YDLN…LTPL), 2202-2222 (YDLR…DEDG), 2234-2254 (YNSN…TVQY), and 2256-2276 (YDGL…LQFF). N-linked (GlcNAc...) asparagine glycosylation is present at N2291. YD repeat units follow at residues 2302-2319 (YDLQ…GEEY) and 2320-2343 (YVAC…IKEI). A Phosphoserine modification is found at S2586. N-linked (GlcNAc...) asparagine glycosylation occurs at N2608.

It belongs to the tenascin family. Teneurin subfamily. In terms of assembly, homodimer; disulfide-linked. Heterodimer with either TENM2 or TENM3. May also form heterodimer with TENM4. Ten-1 ICD interacts with SORBS1 (via third SH3 domain). Interacts with MBD1 isoform 2. Ten-1 ICD interacts with HINT1. Post-translationally, once secreted, may also be cleaved to give rise to the TCAP-1 form. Derives from the plasma membrane form by proteolytic processing. Further proteolytic cleavage may generate 11.9 and 4.7 kDa bioactive peptides. As to expression, isoform 1 and isoform 2 are expressed in the brain. Isoform 2 is expressed in the granular layer of the dentate gyrus and the pyramidal layer (Py) of the CA1, CA2 and CA3 of the hippocampus (at protein level). Expressed in the cortex, thalamus, CA1, CA2, CA3, dentate gyrus and granular layer of the hippocampus. Weakly expressed in kidney, testis and lung.

The protein resides in the cell membrane. It localises to the cytoplasm. It is found in the secreted. Its subcellular location is the nucleus. The protein localises to the nucleus speckle. The protein resides in the nucleus matrix. It localises to the cytoskeleton. Involved in neural development, regulating the establishment of proper connectivity within the nervous system. May function as a cellular signal transducer. Functionally, plays a role in the regulation of neuroplasticity in the limbic system. Mediates a rapid reorganization of actin- and tubulin-based cytoskeleton elements with an increase in dendritic arborization and spine density formation of neurons in the hippocampus and amygdala. Induces BDNF transcription inhibition in neurons. Activates the mitogen-activated protein (MAP) kinase 2 (MEK2) and extracellular signal-regulated kinase (ERK) cascade. Also acts as a bioactive neuroprotective peptide on limbic neurons of the brain and regulates stress-induced behavior: attenuates alkalosis-associated necrotic cell death and the effects of corticotropin-releasing factor (CRF) on c-fos/FOS induction and on the reinstatement of cocaine seeking. Its function is as follows. Induces gene transcription activation. The polypeptide is Teneurin-1 (Tenm1) (Mus musculus (Mouse)).